The chain runs to 334 residues: Fe-S cluster assembly protein DRE2 (334 aa).

An N-terminal SAM-like domain region spans residues 1-131 (MASTKTGLVL…ASIKAEPVAV (131 aa)). The tract at residues 132 to 228 (PLRNHKKTTT…EDELVDENEM (97 aa)) is linker. Residues 135-229 (NHKKTTTPGT…DELVDENEMR (95 aa)) form a disordered region. Over residues 140 to 150 (TTPGTTTTAKK) the composition is skewed to low complexity. Acidic residues-rich tracts occupy residues 182 to 192 (DSEDEDEESEG) and 215 to 227 (DSIE…DENE). Cys238, Cys249, Cys252, and Cys254 together coordinate [2Fe-2S] cluster. Residues 238–254 (CGKSKTRRRKACKDCTC) are fe-S binding site A. [4Fe-4S] cluster contacts are provided by Cys297, Cys300, Cys308, and Cys311. 2 consecutive short sequence motifs (cx2C motif) follow at residues 297–300 (CGSC) and 308–311 (CSGC). Residues 297–311 (CGSCTLGDAFRCSGC) are fe-S binding site B.

Belongs to the anamorsin family. In terms of assembly, monomer. Interacts with TAH18. Interacts with MIA40. Requires [2Fe-2S] cluster as cofactor. It depends on [4Fe-4S] cluster as a cofactor.

The protein localises to the cytoplasm. Its subcellular location is the mitochondrion intermembrane space. Functionally, component of the cytosolic iron-sulfur (Fe-S) protein assembly (CIA) machinery required for the maturation of extramitochondrial Fe-S proteins. Part of an electron transfer chain functioning in an early step of cytosolic Fe-S biogenesis, facilitating the de novo assembly of a [4Fe-4S] cluster on the scaffold complex CFD1-NBP35. Electrons are transferred to DRE2 from NADPH via the FAD- and FMN-containing protein TAH18. TAH18-DRE2 are also required for the assembly of the diferric tyrosyl radical cofactor of ribonucleotide reductase (RNR), probably by providing electrons for reduction during radical cofactor maturation in the catalytic small subunit RNR2. This chain is Fe-S cluster assembly protein DRE2, found in Zygosaccharomyces rouxii (strain ATCC 2623 / CBS 732 / NBRC 1130 / NCYC 568 / NRRL Y-229).